Consider the following 147-residue polypeptide: Hemoglobin subunit gamma (147 aa).

The Globin domain occupies 3 to 147 (NFTAEDKAAI…VASALASRYH (145 aa)). Heme b contacts are provided by histidine 64 and histidine 93.

Belongs to the globin family. As to quaternary structure, heterotetramer of two alpha chains and two gamma chains in fetal hemoglobin (Hb F). As to expression, red blood cells.

Functionally, gamma chains make up the fetal hemoglobin F, in combination with alpha chains. This chain is Hemoglobin subunit gamma (HBG), found in Alouatta seniculus (Red howler monkey).